The following is a 263-amino-acid chain: Hydroxyacylglutathione hydrolase (263 aa).

7 residues coordinate Zn(2+): H56, H58, D60, H61, H115, D135, and H175.

This sequence belongs to the metallo-beta-lactamase superfamily. Glyoxalase II family. Monomer. The cofactor is Zn(2+).

It carries out the reaction an S-(2-hydroxyacyl)glutathione + H2O = a 2-hydroxy carboxylate + glutathione + H(+). Its pathway is secondary metabolite metabolism; methylglyoxal degradation; (R)-lactate from methylglyoxal: step 2/2. Functionally, thiolesterase that catalyzes the hydrolysis of S-D-lactoyl-glutathione to form glutathione and D-lactic acid. In Polaromonas sp. (strain JS666 / ATCC BAA-500), this protein is Hydroxyacylglutathione hydrolase.